The following is a 992-amino-acid chain: Probable RNA-dependent RNA polymerase 3 (992 aa).

The tract at residues 88–113 is disordered; the sequence is PRLSPGESPVQSPRTPAKKSCRASQD.

The protein belongs to the RdRP family.

The enzyme catalyses RNA(n) + a ribonucleoside 5'-triphosphate = RNA(n+1) + diphosphate. In terms of biological role, probably involved in the RNA silencing pathway and required for the generation of small interfering RNAs (siRNAs). The sequence is that of Probable RNA-dependent RNA polymerase 3 (RDR3) from Arabidopsis thaliana (Mouse-ear cress).